A 319-amino-acid polypeptide reads, in one-letter code: Ankyrin repeat domain-containing protein 1 (319 aa).

Residues 63–89 (EKQLEAELKKKKLEQRSKLENLEDLEI) are a coiled coil. ANK repeat units lie at residues 152 to 181 (YKRT…QIEF), 185 to 214 (LEST…KISA), 218 to 247 (LLST…DLNA), 251 to 280 (EGDT…DLTI), and 284 to 315 (AGKT…KTSR).

In terms of assembly, interacts with TTN/titin and YBX1.

It localises to the nucleus. Its function is as follows. May play an important role in endothelial cell activation. May act as a nuclear transcription factor that negatively regulates the expression of cardiac genes. In Oryctolagus cuniculus (Rabbit), this protein is Ankyrin repeat domain-containing protein 1 (ANKRD1).